Here is a 126-residue protein sequence, read N- to C-terminus: Protein ApaG (126 aa).

The ApaG domain maps to 2-126 (SDTQHQVNVR…FRLAVPGALH (125 aa)).

The protein is Protein ApaG of Pseudomonas aeruginosa (strain LESB58).